The primary structure comprises 515 residues: Maturase K (515 aa).

Belongs to the intron maturase 2 family. MatK subfamily.

Its subcellular location is the plastid. It localises to the chloroplast. Its function is as follows. Usually encoded in the trnK tRNA gene intron. Probably assists in splicing its own and other chloroplast group II introns. In Pinus luchuensis (Ryukyu island pine), this protein is Maturase K.